Reading from the N-terminus, the 83-residue chain is Translational regulator CsrA (83 aa).

The protein belongs to the CsrA/RsmA family. Homodimer; the beta-strands of each monomer intercalate to form a hydrophobic core, while the alpha-helices form wings that extend away from the core.

The protein resides in the cytoplasm. In terms of biological role, a translational regulator that binds mRNA to regulate translation initiation and/or mRNA stability. Usually binds in the 5'-UTR at or near the Shine-Dalgarno sequence preventing ribosome-binding, thus repressing translation. Its main target seems to be the major flagellin gene, while its function is anatagonized by FliW. This chain is Translational regulator CsrA, found in Thermotoga petrophila (strain ATCC BAA-488 / DSM 13995 / JCM 10881 / RKU-1).